The sequence spans 318 residues: Ribose-phosphate pyrophosphokinase 1 (318 aa).

Arg-96–Asp-101 contributes to the ATP binding site. 4 residues coordinate Mg(2+): Asp-128, His-130, Asp-139, and Asp-143. His-130 is an ATP binding site. Residues Lys-212–Gly-227 form a binding of phosphoribosylpyrophosphate region.

The protein belongs to the ribose-phosphate pyrophosphokinase family. In terms of assembly, homodimer. The active form is probably a hexamer composed of 3 homodimers. The cofactor is Mg(2+).

The catalysed reaction is D-ribose 5-phosphate + ATP = 5-phospho-alpha-D-ribose 1-diphosphate + AMP + H(+). It functions in the pathway metabolic intermediate biosynthesis; 5-phospho-alpha-D-ribose 1-diphosphate biosynthesis; 5-phospho-alpha-D-ribose 1-diphosphate from D-ribose 5-phosphate (route I): step 1/1. With respect to regulation, activated by magnesium and inorganic phosphate. Functionally, catalyzes the synthesis of phosphoribosylpyrophosphate (PRPP) that is essential for nucleotide synthesis. In Bos taurus (Bovine), this protein is Ribose-phosphate pyrophosphokinase 1 (PRPS1).